The chain runs to 802 residues: Fibroblast growth factor receptor 3 (802 aa).

An Ig-like C2-type 1 domain is found at 27–115; that stretch reads PDYLMVEQPP…ILRNFTIRVT (89 aa). A disulfide bridge links cysteine 52 with cysteine 98. N-linked (GlcNAc...) asparagine glycans are attached at residues asparagine 74, asparagine 87, and asparagine 109. The interval 116 to 148 is disordered; that stretch reads DLPSSGDDEDDDDDDDDETEDREPPRWTQPERM. The span at 121–136 shows a compositional bias: acidic residues; the sequence is GDDEDDDDDDDDETED. The span at 137 to 148 shows a compositional bias: basic and acidic residues; sequence REPPRWTQPERM. Ig-like C2-type domains are found at residues 140-233 and 242-342; these read PRWT…YQLD and PILQ…FWLH. Cysteine 165 and cysteine 217 are oxidised to a cystine. 5 N-linked (GlcNAc...) asparagine glycosylation sites follow: asparagine 214, asparagine 251, asparagine 283, asparagine 303, and asparagine 315. Cysteine 264 and cysteine 326 are oxidised to a cystine. The chain crosses the membrane as a helical span at residues 363 to 383; it reads ITVLIVVTSTIVFILLVIIVI. Over 384–802 the chain is Cytoplasmic; the sequence is THLMKVPSKK…HQQHNGAIPT (419 aa). A Protein kinase domain is found at 462–751; the sequence is LTLGKPLGEG…LTVTSTNEYL (290 aa). Residues 468–476 and lysine 498 each bind ATP; that span reads LGEGCFGQV. Residue aspartate 607 is the Proton acceptor of the active site. 4 positions are modified to phosphotyrosine; by autocatalysis: tyrosine 637, tyrosine 638, tyrosine 714, and tyrosine 750.

It belongs to the protein kinase superfamily. Tyr protein kinase family. Fibroblast growth factor receptor subfamily. As to quaternary structure, monomer. Homodimer after ligand binding. In terms of processing, autophosphorylated. Binding of FGF family members together with heparan sulfate proteoglycan or heparin promotes receptor dimerization and autophosphorylation on tyrosine residues. Autophosphorylation occurs in trans between the two FGFR molecules present in the dimer.

It is found in the cell membrane. The enzyme catalyses L-tyrosyl-[protein] + ATP = O-phospho-L-tyrosyl-[protein] + ADP + H(+). With respect to regulation, present in an inactive conformation in the absence of bound ligand. Ligand binding leads to dimerization and activation by autophosphorylation on tyrosine residues. In terms of biological role, tyrosine-protein kinase that acts as a cell-surface receptor for fibroblast growth factors and plays an essential role in the regulation of cell proliferation, differentiation and apoptosis. Plays an essential role in the regulation of chondrocyte differentiation, proliferation and apoptosis, and is required for normal skeleton development. Regulates both osteogenesis and postnatal bone mineralization by osteoblasts. Promotes apoptosis in chondrocytes, but can also promote cancer cell proliferation. Phosphorylates PLCG1, CBL and FRS2. Ligand binding leads to the activation of several signaling cascades. Activation of PLCG1 leads to the production of the cellular signaling molecules diacylglycerol and inositol 1,4,5-trisphosphate. Phosphorylation of FRS2 triggers recruitment of GRB2, GAB1, PIK3R1 and SOS1, and mediates activation of RAS, MAPK1/ERK2, MAPK3/ERK1 and the MAP kinase signaling pathway, as well as of the AKT1 signaling pathway. The polypeptide is Fibroblast growth factor receptor 3 (fgfr3) (Xenopus laevis (African clawed frog)).